Reading from the N-terminus, the 590-residue chain is DNA mismatch repair protein MutL (590 aa).

Belongs to the DNA mismatch repair MutL/HexB family.

In terms of biological role, this protein is involved in the repair of mismatches in DNA. It is required for dam-dependent methyl-directed DNA mismatch repair. May act as a 'molecular matchmaker', a protein that promotes the formation of a stable complex between two or more DNA-binding proteins in an ATP-dependent manner without itself being part of a final effector complex. This chain is DNA mismatch repair protein MutL, found in Caldanaerobacter subterraneus subsp. tengcongensis (strain DSM 15242 / JCM 11007 / NBRC 100824 / MB4) (Thermoanaerobacter tengcongensis).